Consider the following 308-residue polypeptide: Ribosomal RNA small subunit methyltransferase H (308 aa).

S-adenosyl-L-methionine contacts are provided by residues 34 to 36 (GGH), Asp54, Phe80, Asp101, and Gln108.

This sequence belongs to the methyltransferase superfamily. RsmH family.

The protein resides in the cytoplasm. The catalysed reaction is cytidine(1402) in 16S rRNA + S-adenosyl-L-methionine = N(4)-methylcytidine(1402) in 16S rRNA + S-adenosyl-L-homocysteine + H(+). Functionally, specifically methylates the N4 position of cytidine in position 1402 (C1402) of 16S rRNA. This is Ribosomal RNA small subunit methyltransferase H from Ureaplasma urealyticum serovar 10 (strain ATCC 33699 / Western).